The primary structure comprises 452 residues: Type II methyltransferase M.EcaI (452 aa).

Belongs to the N(4)/N(6)-methyltransferase family.

It carries out the reaction a 2'-deoxyadenosine in DNA + S-adenosyl-L-methionine = an N(6)-methyl-2'-deoxyadenosine in DNA + S-adenosyl-L-homocysteine + H(+). Its function is as follows. A beta subtype methylase, recognizes the double-stranded sequence 5'-GGTNACC-3', methylates A-5 on both strands and protects the DNA from cleavage by the EcaI endonuclease. This is Type II methyltransferase M.EcaI (ecaIM) from Enterobacter cloacae.